A 381-amino-acid chain; its full sequence is DNA repair protein RAD51 homolog 3 (381 aa).

Residues 1 to 24 (MDEDINKDTNNNNNTTDSNNNNNN) form a disordered region. Positions 8-24 (DTNNNNNTTDSNNNNNN) are enriched in low complexity. Position 89 to 96 (89 to 96 (GVPGIGKT)) interacts with ATP. Residues 313-381 (GFNHPPPLNP…NDENEMYIEN (69 aa)) form a disordered region. Residues 323 to 377 (EDQEQEKEKEKRKKKNNNNNNNNNNNNNNNNNNNNNNNNNNNNNNNNKNNDENEM) are a coiled coil. Residues 339-370 (NNNNNNNNNNNNNNNNNNNNNNNNNNNNNNNK) show a composition bias toward low complexity.

This sequence belongs to the RecA family. RAD51 subfamily.

It is found in the nucleus. Its function is as follows. Involved in the homologous recombination repair (HRR) pathway of double-stranded DNA breaks arising during DNA replication or induced by DNA-damaging agents. This chain is DNA repair protein RAD51 homolog 3 (rad51c), found in Dictyostelium discoideum (Social amoeba).